Here is a 193-residue protein sequence, read N- to C-terminus: tRNA (cytidine(56)-2'-O)-methyltransferase (193 aa).

S-adenosyl-L-methionine contacts are provided by residues Leu86 and 115 to 119; that span reads GGEKV.

The protein belongs to the aTrm56 family. As to quaternary structure, homodimer.

It localises to the cytoplasm. The catalysed reaction is cytidine(56) in tRNA + S-adenosyl-L-methionine = 2'-O-methylcytidine(56) in tRNA + S-adenosyl-L-homocysteine + H(+). Its function is as follows. Specifically catalyzes the AdoMet-dependent 2'-O-ribose methylation of cytidine at position 56 in tRNAs. The polypeptide is tRNA (cytidine(56)-2'-O)-methyltransferase (Haloquadratum walsbyi (strain DSM 16790 / HBSQ001)).